We begin with the raw amino-acid sequence, 233 residues long: Orotidine 5'-phosphate decarboxylase (233 aa).

Substrate is bound by residues aspartate 13, lysine 35, aspartate 62–threonine 71, threonine 122, arginine 182, glutamine 191, glycine 211, and arginine 212. Lysine 64 serves as the catalytic Proton donor.

This sequence belongs to the OMP decarboxylase family. Type 1 subfamily. In terms of assembly, homodimer.

It catalyses the reaction orotidine 5'-phosphate + H(+) = UMP + CO2. It participates in pyrimidine metabolism; UMP biosynthesis via de novo pathway; UMP from orotate: step 2/2. Functionally, catalyzes the decarboxylation of orotidine 5'-monophosphate (OMP) to uridine 5'-monophosphate (UMP). The sequence is that of Orotidine 5'-phosphate decarboxylase from Pseudomonas fluorescens (strain ATCC BAA-477 / NRRL B-23932 / Pf-5).